A 235-amino-acid chain; its full sequence is Small ribosomal subunit protein uS3 (235 aa).

The region spanning Val-39–Lys-107 is the KH type-2 domain. Residues Ala-215–Lys-235 form a disordered region.

It belongs to the universal ribosomal protein uS3 family. As to quaternary structure, part of the 30S ribosomal subunit. Forms a tight complex with proteins S10 and S14.

Its function is as follows. Binds the lower part of the 30S subunit head. Binds mRNA in the 70S ribosome, positioning it for translation. The protein is Small ribosomal subunit protein uS3 of Haemophilus influenzae (strain PittEE).